Here is a 394-residue protein sequence, read N- to C-terminus: Cytohesin-4 (394 aa).

Residues 12–65 (SSGETEELQRIKWHRKQLLEDIQKLKDEIADVFAQIDCFESAEESRMAQKEKEL) adopt a coiled-coil conformation. In terms of domain architecture, SEC7 spans 54-241 (EESRMAQKEK…RNLFDSIKSE (188 aa)). In terms of domain architecture, PH spans 259–375 (NPDREGWLLK…WIESIRASIT (117 aa)). Residues 268–275 (KLGGRVKT), arginine 279, tyrosine 290, and arginine 300 contribute to the a 1,2-diacyl-sn-glycero-3-phospho-(1D-myo-inositol-3,4,5-trisphosphate) site. Residues 386 to 394 (RKKKIASKQ) are C-terminal autoinhibitory region.

Expressed predominantly in peripheral blood leukocytes.

It localises to the cell membrane. Promotes guanine-nucleotide exchange on ARF1 and ARF5. Promotes the activation of ARF factors through replacement of GDP with GTP. This chain is Cytohesin-4 (CYTH4), found in Homo sapiens (Human).